Reading from the N-terminus, the 225-residue chain is UPF0700 transmembrane protein YoaK (225 aa).

6 helical membrane passes run 10–30 (LLSL…LSLG), 56–76 (VFNS…ATLM), 99–119 (ILFV…HILI), 137–157 (GIAG…LEDI), 174–194 (TVLR…VALA), and 197–217 (DFYH…MMTA).

The protein belongs to the UPF0700 family.

It localises to the cell membrane. The protein is UPF0700 transmembrane protein YoaK (yoaK) of Bacillus subtilis (strain 168).